The chain runs to 363 residues: rRNA processing protein rcl1 (363 aa).

The protein belongs to the RNA 3'-terminal cyclase family. Type 2 subfamily. In terms of assembly, interacts directly with bms1 and the U3 snoRNA to form a stable subcomplex. Component of the 90S small subunit processome also known as 90S pre-ribosome that consists of the 35S pre-rRNA, early-associating ribosomal proteins most of which are part of the small ribosomal subunit, the U3 snoRNA and associated proteins.

The protein localises to the nucleus. Its subcellular location is the nucleolus. Does not have cyclase activity. Plays a role in 40S-ribosomal-subunit biogenesis in the early pre-rRNA processing steps at sites A0, A1 and A2 that are required for proper maturation of the 18S RNA. Rcl1 activates bms1 by promoting GDP/GTP exchange. The sequence is that of rRNA processing protein rcl1 (rcl1) from Schizosaccharomyces pombe (strain 972 / ATCC 24843) (Fission yeast).